Here is a 464-residue protein sequence, read N- to C-terminus: Flavin-containing monooxygenase FMO GS-OX-like 7 (464 aa).

Gly-18 to Gly-23 is a binding site for FAD. An NADP(+)-binding site is contributed by Gly-214 to Gly-219.

The protein belongs to the FMO family. FAD is required as a cofactor.

Its function is as follows. Catalyzes the conversion of methylthioalkyl glucosinolates of any chain length into methylsulfinylalkyl glucosinolates. In Arabidopsis thaliana (Mouse-ear cress), this protein is Flavin-containing monooxygenase FMO GS-OX-like 7.